We begin with the raw amino-acid sequence, 221 residues long: Protein Thf1 (221 aa).

A coiled-coil region spans residues Thr174–Arg213.

The protein belongs to the THF1 family.

Its function is as follows. May be involved in photosynthetic membrane biogenesis. The sequence is that of Protein Thf1 from Prochlorococcus marinus (strain MIT 9211).